A 240-amino-acid polypeptide reads, in one-letter code: HTH-type transcriptional regulator Mce2R (240 aa).

The HTH gntR-type domain maps to 9-77 (RSVPEEVFEQ…QGDVTTVRDF (69 aa)). The segment at residues 37-56 (ERRLAELLGVSRPAVREALK) is a DNA-binding region (H-T-H motif).

Functionally, negatively regulates the expression of its operon as well as expression of end (endonuclease 4). This is HTH-type transcriptional regulator Mce2R (mce2R) from Mycobacterium tuberculosis (strain CDC 1551 / Oshkosh).